A 515-amino-acid chain; its full sequence is 2-isopropylmalate synthase (515 aa).

A Pyruvate carboxyltransferase domain is found at 4–266; it reads INIFDTTLRD…ETRLNLQEIK (263 aa). Residues Asp13, His201, His203, and Asn237 each coordinate Mn(2+). Residues 391-515 are regulatory domain; sequence QLSSLQVQYG…RAENQKVAMQ (125 aa).

It belongs to the alpha-IPM synthase/homocitrate synthase family. LeuA type 1 subfamily. In terms of assembly, homodimer. The cofactor is Mn(2+).

It is found in the cytoplasm. It catalyses the reaction 3-methyl-2-oxobutanoate + acetyl-CoA + H2O = (2S)-2-isopropylmalate + CoA + H(+). It functions in the pathway amino-acid biosynthesis; L-leucine biosynthesis; L-leucine from 3-methyl-2-oxobutanoate: step 1/4. In terms of biological role, catalyzes the condensation of the acetyl group of acetyl-CoA with 3-methyl-2-oxobutanoate (2-ketoisovalerate) to form 3-carboxy-3-hydroxy-4-methylpentanoate (2-isopropylmalate). The sequence is that of 2-isopropylmalate synthase from Geobacillus sp. (strain WCH70).